The following is a 410-amino-acid chain: Imidazolonepropionase (410 aa).

Fe(3+) contacts are provided by histidine 71 and histidine 73. Zn(2+) contacts are provided by histidine 71 and histidine 73. The 4-imidazolone-5-propanoate site is built by arginine 80, tyrosine 143, and histidine 175. Position 143 (tyrosine 143) interacts with N-formimidoyl-L-glutamate. Residue histidine 235 participates in Fe(3+) binding. Position 235 (histidine 235) interacts with Zn(2+). Glutamate 238 contributes to the 4-imidazolone-5-propanoate binding site. Aspartate 309 contacts Fe(3+). Aspartate 309 provides a ligand contact to Zn(2+).

It belongs to the metallo-dependent hydrolases superfamily. HutI family. Zn(2+) is required as a cofactor. Requires Fe(3+) as cofactor.

Its subcellular location is the cytoplasm. The enzyme catalyses 4-imidazolone-5-propanoate + H2O = N-formimidoyl-L-glutamate. The protein operates within amino-acid degradation; L-histidine degradation into L-glutamate; N-formimidoyl-L-glutamate from L-histidine: step 3/3. Functionally, catalyzes the hydrolytic cleavage of the carbon-nitrogen bond in imidazolone-5-propanoate to yield N-formimidoyl-L-glutamate. It is the third step in the universal histidine degradation pathway. This is Imidazolonepropionase from Thermoplasma acidophilum (strain ATCC 25905 / DSM 1728 / JCM 9062 / NBRC 15155 / AMRC-C165).